The primary structure comprises 132 residues: Interleukin-5 (132 aa).

The N-terminal stretch at 1–17 (MRLPLQLSILTLAWVWA) is a signal peptide. N-linked (GlcNAc...) asparagine glycans are attached at residues Asn45, Asn74, and Asn88.

Belongs to the IL-5 family. In terms of assembly, homodimer; disulfide-linked. Interacts with IL5RA. Interacts with CSF2RB.

The protein localises to the secreted. Homodimeric cytokine expressed predominantly by T-lymphocytes and NK cells that plays an important role in the survival, differentiation, and chemotaxis of eosinophils. Also acts on activated and resting B-cells to induce immunoglobulin production, growth, and differentiation. Mechanistically, exerts its biological effects through a receptor composed of IL5RA subunit and the cytokine receptor common subunit beta/CSF2RB. Binding to the receptor leads to activation of various kinases including LYN, SYK and JAK2 and thereby propagates signals through the RAS-MAPK and JAK-STAT5 pathways respectively. In Meriones unguiculatus (Mongolian jird), this protein is Interleukin-5 (IL5).